A 164-amino-acid chain; its full sequence is Histone H1 (164 aa).

Polar residues predominate over residues 1-10 (MAPRSSTSKS). A disordered region spans residues 1 to 164 (MAPRSSTSKS…KKSSKPAKKN (164 aa)). The segment covering 16–27 (KDHKKAPIKKAI) has biased composition (basic residues). Thr47 and Thr54 each carry phosphothreonine. Basic and acidic residues-rich tracts occupy residues 49 to 61 (VKKDVTPVKADTK), 69 to 89 (TMKETVSDAKKTVHAAAGDKK), and 117 to 156 (TKKEVKKDNKTAKKETKKDHKPAKKEAKKETKPAKKDAKK).

In terms of processing, cell-growth/division-associated phosphorylation by a CDC2-like kinase.

It localises to the nucleus. It is found in the chromosome. Functionally, histones H1 are necessary for the condensation of nucleosome chains into higher-order structures. This chain is Histone H1 (HHO), found in Tetrahymena thermophila (strain SB210).